We begin with the raw amino-acid sequence, 293 residues long: Urease accessory protein UreD 2 (293 aa).

This sequence belongs to the UreD family. In terms of assembly, ureD, UreF and UreG form a complex that acts as a GTP-hydrolysis-dependent molecular chaperone, activating the urease apoprotein by helping to assemble the nickel containing metallocenter of UreC. The UreE protein probably delivers the nickel.

Its subcellular location is the cytoplasm. Its function is as follows. Required for maturation of urease via the functional incorporation of the urease nickel metallocenter. This is Urease accessory protein UreD 2 from Streptomyces griseus subsp. griseus (strain JCM 4626 / CBS 651.72 / NBRC 13350 / KCC S-0626 / ISP 5235).